The chain runs to 368 residues: Abasic site processing protein YMR114C (368 aa).

Residue Cys-2 is the Nucleophile of the active site. The residue at position 2 (Cys-2) is a Thiazolidine linkage to a ring-opened DNA abasic site. Positions Val-25 to Pro-48 are disordered. Residues His-37 to Asp-46 show a composition bias toward basic and acidic residues. Residue Glu-132 is part of the active site. A disordered region spans residues Leu-270–Lys-368. Composition is skewed to basic and acidic residues over residues Arg-281 to Asn-296, Asn-304 to Glu-313, and Ile-326 to Asn-349. Ser-338 is modified (phosphoserine).

The protein belongs to the SOS response-associated peptidase family.

It is found in the chromosome. Its activity is regulated as follows. Formation and reversal of DNA-protein cross-link depends on DNA context. Catalyzes formation of the thiazolidine linkage in presence of abasic sites in single-stranded DNA. Mediates the reversal of the thiazolidine cross-link in presence of double stranded DNA. Functionally, sensor of abasic sites in single-stranded DNA (ssDNA) required to preserve genome integrity by promoting error-free repair of abasic sites. Recognizes and binds abasic sites in ssDNA at replication forks and chemically modifies the lesion by forming a covalent cross-link with DNA: forms a stable thiazolidine linkage between a ring-opened abasic site and the alpha-amino and sulfhydryl substituents of its N-terminal catalytic cysteine residue. The DNA-protein cross-link is then reversed: able to catalyze the reversal of the thiazolidine cross-link and cycle between a cross-link and a non-cross-linked state depending on DNA context: mediates self-reversal of the thiazolidine cross-link in double stranded DNA. Acts as a protease: mediates autocatalytic processing of its N-terminal methionine in order to expose the catalytic cysteine. This is Abasic site processing protein YMR114C from Saccharomyces cerevisiae (strain ATCC 204508 / S288c) (Baker's yeast).